Consider the following 168-residue polypeptide: Iron-sulfur cluster assembly enzyme ISCU (168 aa).

Residues 1–35 constitute a mitochondrion transit peptide; sequence MAAATGAGRLRRAASALLLRSPRLPARELSAPARL. S15 carries the phosphoserine modification. The active-site Cysteine persulfide intermediate is C70. C70 is subject to Cysteine persulfide. Zn(2+)-binding residues include D72, C96, and C139. The active-site Cysteine persulfide intermediate is the C139. The residue at position 139 (C139) is a Cysteine persulfide.

Belongs to the NifU family. As to quaternary structure, homodimer; Tyr-36-mediated dimerization of two iron- and sulfide-containing ISCU subunit bind to the cysteine desulfurase complex. Component of the mitochondrial core iron-sulfur cluster (ISC) complex composed of NFS1, LYRM4, NDUFAB1, ISCU, FXN, and FDX2; this complex is a heterohexamer containing two copies of each monomer. Interacts (D-state) with NFS1 (homodimer form); each monomer interacts with the C-terminal regions of each NFS1 monomer. Interacts (monomer form) with FXN (via ferrous form); the interaction is possible when both are bound to the dimeric form of the cysteine desulfurase complex (NFS1:LYRM4) and enhances FXN interaction to the dimeric form of the cysteine desulfurase complex (NFS1:LYRM4). Interacts with GLRX5. Interacts (D-state) with HSPA9. Interacts (S-state) with HSCB; this interaction stimulates the ATPase activity of HSPA9. Component of a complex composed of FXN, NFS1, LYRM4 and ISCU. Cysteine persulfide is reduced by thiol-containing molecules such as glutathione and L-cysteine. Post-translationally, phosphorylation at Ser-15 is required for ISCU protein stabilization in the cytosol, whereas dephosphorylation of Ser-15, due to the inhibition of mTORC1 (mammalian target of rapamycin complex 1) complex, leads to degradation of the precursor form and ultimately to a decrease in the mitochondrial mature form.

Its subcellular location is the mitochondrion. In terms of biological role, mitochondrial scaffold protein, of the core iron-sulfur cluster (ISC) assembly complex, that provides the structural architecture on which the [2Fe-2S] clusters are assembled. The core iron-sulfur cluster (ISC) assembly complex is involved in the de novo synthesis of a [2Fe-2S] cluster, the first step of the mitochondrial iron-sulfur protein biogenesis. This process is initiated by the cysteine desulfurase complex (NFS1:LYRM4:NDUFAB1) that produces persulfide which is delivered on the scaffold protein ISCU in a FXN-dependent manner. Then this complex is stabilized by FDX2 which provides reducing equivalents to accomplish the [2Fe-2S] cluster assembly. Finally, the [2Fe-2S] cluster is transferred from ISCU to chaperone proteins, including HSCB, HSPA9 and GLRX5. Exists as two slow interchanging conformational states, a structured (S) and disordered (D) form. May modulate NFS1 desulfurase activity in a zinc-dependent manner. Modulates the interaction between FXN and the cysteine desulfurase complex. This chain is Iron-sulfur cluster assembly enzyme ISCU, found in Mus musculus (Mouse).